Reading from the N-terminus, the 341-residue chain is tRNA N6-adenosine threonylcarbamoyltransferase (341 aa).

Fe cation-binding residues include His-111 and His-115. Residues 134–138 (LVSGG), Asp-167, Gly-180, and Asn-277 each bind substrate. Asp-305 is a Fe cation binding site.

This sequence belongs to the KAE1 / TsaD family. It depends on Fe(2+) as a cofactor.

The protein resides in the cytoplasm. It carries out the reaction L-threonylcarbamoyladenylate + adenosine(37) in tRNA = N(6)-L-threonylcarbamoyladenosine(37) in tRNA + AMP + H(+). In terms of biological role, required for the formation of a threonylcarbamoyl group on adenosine at position 37 (t(6)A37) in tRNAs that read codons beginning with adenine. Is involved in the transfer of the threonylcarbamoyl moiety of threonylcarbamoyl-AMP (TC-AMP) to the N6 group of A37, together with TsaE and TsaB. TsaD likely plays a direct catalytic role in this reaction. This Chromobacterium violaceum (strain ATCC 12472 / DSM 30191 / JCM 1249 / CCUG 213 / NBRC 12614 / NCIMB 9131 / NCTC 9757 / MK) protein is tRNA N6-adenosine threonylcarbamoyltransferase.